Consider the following 240-residue polypeptide: Protein YIPF6 (240 aa).

Residues 1–91 (MVVSHLNRTV…PKKSSALLRD (91 aa)) are Cytoplasmic-facing. The chain crosses the membrane as a helical span at residues 92-112 (WDLWGPLLLCVTLALMLQGGS). Residues 113–125 (ADSEEDGRPQFAE) are Lumenal-facing. The chain crosses the membrane as a helical span at residues 126-146 (VFVIIWFGSVIITLNSKLLGG). Topologically, residues 147–149 (TIS) are cytoplasmic. Residues 150 to 170 (FFQSLCVLGYCILPLTVAMIV) form a helical membrane-spanning segment. The Lumenal segment spans residues 171–172 (CR). A helical transmembrane segment spans residues 173–193 (IVLLGGSGVVSFAVRLIVVTA). Topologically, residues 194–215 (SFSWSTFASTAFLADSQPTNRK) are cytoplasmic. The chain crosses the membrane as a helical span at residues 216-236 (ALVVYPVFLFYFVIGWMILTF). Over 237 to 240 (SPSH) the chain is Lumenal.

The protein belongs to the YIP1 family.

It localises to the golgi apparatus membrane. This chain is Protein YIPF6 (yipf6), found in Danio rerio (Zebrafish).